A 101-amino-acid polypeptide reads, in one-letter code: Protein S100-A11 (101 aa).

EF-hand domains are found at residues 13-48 (IESLLAVFQRYAGREGDNLKLSKKEFRTFMNTELAS) and 54-89 (KDPAVVDRMMKRLDINSDGQLDFQEFLNLIGGIAVA). Residues Asn30, Lys32, Glu37, Asp67, Asn69, Asp71, Gln73, and Glu78 each contribute to the Ca(2+) site.

This sequence belongs to the S-100 family. In terms of assembly, homodimer; disulfide-linked. Smooth muscle and non-muscle tissues.

The sequence is that of Protein S100-A11 (S100A11) from Gallus gallus (Chicken).